Consider the following 491-residue polypeptide: Hydroxymethylglutaryl-CoA synthase (491 aa).

Glu-127 acts as the Proton donor/acceptor in catalysis. Cys-159 functions as the Acyl-thioester intermediate in the catalytic mechanism. Residues Cys-159, Thr-201, and Ser-250 each contribute to the (3S)-3-hydroxy-3-methylglutaryl-CoA site. Residue Ser-276 is modified to Phosphoserine. The Proton donor/acceptor role is filled by His-296. 4 residues coordinate (3S)-3-hydroxy-3-methylglutaryl-CoA: His-296, Lys-305, Asn-371, and Ser-405.

The protein belongs to the thiolase-like superfamily. HMG-CoA synthase family.

It carries out the reaction acetoacetyl-CoA + acetyl-CoA + H2O = (3S)-3-hydroxy-3-methylglutaryl-CoA + CoA + H(+). The protein operates within metabolic intermediate biosynthesis; (R)-mevalonate biosynthesis; (R)-mevalonate from acetyl-CoA: step 2/3. In terms of biological role, hydroxymethylglutaryl-CoA synthase; part of the first module of ergosterol biosynthesis pathway that includes the early steps of the pathway, conserved across all eukaryotes, and which results in the formation of mevalonate from acetyl-coenzyme A (acetyl-CoA). ERG13 condenses acetyl-CoA with acetoacetyl-CoA to form hydroxymethylglutaryl-CoA (HMG-CoA). The first module starts with the action of the cytosolic acetyl-CoA acetyltransferase ERG10 that catalyzes the formation of acetoacetyl-CoA. The hydroxymethylglutaryl-CoA synthase ERG13 then condenses acetyl-CoA with acetoacetyl-CoA to form HMG-CoA. The rate-limiting step of the early module is the reduction to mevalonate by the 3-hydroxy-3-methylglutaryl-coenzyme A (HMG-CoA) reductases HMG1 and HMG2 which are derived from a single ancestral HMGR gene by gene duplication. The sequence is that of Hydroxymethylglutaryl-CoA synthase from Saccharomyces cerevisiae (strain ATCC 204508 / S288c) (Baker's yeast).